Here is a 380-residue protein sequence, read N- to C-terminus: Cystathionine beta-lyase (380 aa).

At Lys196 the chain carries N6-(pyridoxal phosphate)lysine.

It belongs to the trans-sulfuration enzymes family. Requires pyridoxal 5'-phosphate as cofactor.

It is found in the cytoplasm. The catalysed reaction is L,L-cystathionine + H2O = L-homocysteine + pyruvate + NH4(+). The enzyme catalyses an S-substituted L-cysteine + H2O = a thiol + pyruvate + NH4(+). It functions in the pathway amino-acid biosynthesis; L-methionine biosynthesis via de novo pathway; L-homocysteine from L-cystathionine: step 1/1. Functionally, the enzymatic degradation of amino acids in cheese is believed to generate aroma compounds and therefore to be essential for flavor development. Cystathionine beta-lyase (CBL) can convert cystathionine to homocysteine but is also able to catalyze an alpha, gamma elimination. With methionine as a substrate, it produces volatile sulfur compounds which are important for flavor formation in Gouda cheese. This is Cystathionine beta-lyase (metC) from Lactococcus lactis subsp. lactis (strain IL1403) (Streptococcus lactis).